Consider the following 384-residue polypeptide: Probable fructokinase-6, chloroplastic (384 aa).

A chloroplast-targeting transit peptide spans 1-46; it reads MALQATTTTFCFSGPTFRSTPHSLTSKRPISIKATTSSPSRLSNSR. The segment at 34–61 is disordered; it reads ATTSSPSRLSNSRSNLKGRALSSDGSTQ. Over residues 35-48 the composition is skewed to low complexity; that stretch reads TTSSPSRLSNSRSN.

The protein belongs to the carbohydrate kinase PfkB family.

Its subcellular location is the plastid. It is found in the chloroplast. It carries out the reaction D-fructose + ATP = D-fructose 6-phosphate + ADP + H(+). It participates in glycan biosynthesis; starch biosynthesis. Its function is as follows. May play an important role in maintaining the flux of carbon towards starch formation. This chain is Probable fructokinase-6, chloroplastic, found in Arabidopsis thaliana (Mouse-ear cress).